Reading from the N-terminus, the 58-residue chain is Ribosome biogenesis protein Nop10 (58 aa).

This sequence belongs to the NOP10 family.

Its function is as follows. Involved in ribosome biogenesis; more specifically in 18S rRNA pseudouridylation and in cleavage of pre-rRNA. The chain is Ribosome biogenesis protein Nop10 from Thermococcus onnurineus (strain NA1).